Consider the following 684-residue polypeptide: Collagen alpha-3(IX) chain (684 aa).

Residues 1–25 (MAGPRACAPLLLLLLLGELLAAAGA) form the signal peptide. Disordered regions lie at residues 26 to 521 (QRVG…KEAS) and 548 to 665 (LAPG…CDTS). The triple-helical region 3 (COL3) stretch occupies residues 29 to 519 (GLPGPPGPPG…TGKPGVPGKE (491 aa)). Pro residues-rich tracts occupy residues 31–42 (PGPPGPPGPPGK) and 55–64 (PGLPGPPGPK). The segment covering 66-82 (APGKPGKPGEAGLPGLP) has biased composition (low complexity). Gly residues predominate over residues 130–139 (GPPGGIGLRG). 2 stretches are compositionally biased toward pro residues: residues 140–161 (PPGP…PPGH) and 177–188 (ICPPGPPGPPGM). The span at 200–212 (EQGEVGKDGEKGD) shows a compositional bias: basic and acidic residues. Low complexity predominate over residues 221–237 (LPGSVGLQGPRGLRGLP). 2 stretches are compositionally biased toward basic and acidic residues: residues 264-282 (AGDR…KGDL) and 344-356 (SKGE…RAGE). The Cell attachment site signature appears at 423–425 (RGD). Residue N483 is glycosylated (N-linked (GlcNAc...) asparagine). Positions 498 to 507 (LGLQGVPGVP) are enriched in low complexity. The segment at 520 to 550 (ASEQRIRELCGGMISEQIAQLAAHLRKPLAP) is nonhelical region 3 (NC3). The tract at residues 551-630 (GSIGRPGPAG…QGPQGVPGTS (80 aa)) is triple-helical region 2 (COL2). Over residues 558 to 568 (PAGPPGPPGPP) the composition is skewed to pro residues. Low complexity predominate over residues 570 to 586 (SIGHPGARGPPGYRGPT). Positions 601–603 (RGD) match the Cell attachment site motif. The span at 617–628 (DQGPQGPQGVPG) shows a compositional bias: low complexity. The segment at 631-632 (KD) is nonhelical region 2 (NC2). Residues 633-661 (GQDGAPGEPGPPGDPGLPGAIGAQGTPGI) form a triple-helical region 1 (COL1) region. The tract at residues 662–684 (CDTSACQGAVLGGVGEKSGSRSS) is nonhelical region 1 (NC1).

The protein belongs to the fibril-associated collagens with interrupted helices (FACIT) family. In terms of assembly, heterotrimer of an alpha 1(IX), an alpha 2(IX) and an alpha 3(IX) chain. Covalently linked to the telopeptides of type II collagen by lysine-derived cross-links. In terms of processing, prolines at the third position of the tripeptide repeating unit (G-X-Y) are hydroxylated in some or all of the chains.

The protein localises to the secreted. It is found in the extracellular space. Its subcellular location is the extracellular matrix. Structural component of hyaline cartilage and vitreous of the eye. The sequence is that of Collagen alpha-3(IX) chain (COL9A3) from Homo sapiens (Human).